The sequence spans 347 residues: Vitellogenin-3 (347 aa).

Residues 1 to 15 (MRGFILALVLALVGA) form the signal peptide. Asparagine 80 carries an N-linked (GlcNAc...) asparagine glycan. Over residues 104–118 (PSATPLSSSSSTDSS) the composition is skewed to low complexity. 2 disordered regions span residues 104-174 (PSAT…DKHC) and 200-234 (QDPRRKVQNSSISSSSSSSSDEGISTPVSQPMFLG). The segment covering 124–133 (PGNKRDKDEI) has biased composition (basic and acidic residues). Over residues 144–163 (SSSSSSSSSTGSGSSKTCSS) the composition is skewed to low complexity. Over residues 164–174 (SREDSSRDKHC) the composition is skewed to basic and acidic residues. An N-linked (GlcNAc...) asparagine glycan is attached at asparagine 208. Low complexity predominate over residues 209–219 (SSISSSSSSSS).

Post-translationally, phosvitin, an egg yolk storage protein, is one of the most highly phosphorylated (10%) proteins in nature. In terms of processing, cathepsin D is responsible for intraoocytic processing of vitellogenin. May contain intrachain disulfide bonds. As to expression, produced by the liver, secreted into the blood and then sequestered by receptor mediated endocytosis into growing oocytes, where it is generally cleaved, giving rise to the respective yolk components.

Its function is as follows. Precursor of the egg-yolk proteins that are sources of nutrients during early development of oviparous organisms. Functionally, phosvitin is believed to be of importance in sequestering calcium, iron and other cations for the developing embryo. The chain is Vitellogenin-3 (VTG3) from Gallus gallus (Chicken).